The primary structure comprises 397 residues: Monooxygenase 1 (397 aa).

This sequence belongs to the 3-hydroxybenzoate 6-hydroxylase family. In terms of assembly, monomer. FAD is required as a cofactor. As to expression, expressed in seedlings, roots, leaves, flowers and siliques.

The protein is Monooxygenase 1 of Arabidopsis thaliana (Mouse-ear cress).